The following is a 302-amino-acid chain: Acetylglutamate kinase (302 aa).

Residues 67–68 (GG), R89, and N189 each bind substrate.

Belongs to the acetylglutamate kinase family. ArgB subfamily.

The protein resides in the cytoplasm. It carries out the reaction N-acetyl-L-glutamate + ATP = N-acetyl-L-glutamyl 5-phosphate + ADP. It functions in the pathway amino-acid biosynthesis; L-arginine biosynthesis; N(2)-acetyl-L-ornithine from L-glutamate: step 2/4. Its function is as follows. Catalyzes the ATP-dependent phosphorylation of N-acetyl-L-glutamate. The protein is Acetylglutamate kinase of Streptomyces clavuligerus.